The following is a 209-amino-acid chain: MLKTMRRHGITLALFAAGATGLTAVVNSLTENTIAHQAALQQKALLDQVVPAENYDNDMQAECYVVTDSALGNMAPHRLYLARKGNQPVAAAIETTAPDGYSGAIQLLVGADFHGNVLGSRVIEHHETPGLGDKIDIRISDWINHFSGQHVTGDDDKRWAVKKDGGSFDQFTGATITPRAVVRAVKNAALYLQTLPPQLSRLPSCGEDQ.

The chain crosses the membrane as a helical span at residues 9-29 (GITLALFAAGATGLTAVVNSL). The residue at position 175 (Thr175) is an FMN phosphoryl threonine.

Belongs to the RnfG family. The complex is composed of six subunits: RnfA, RnfB, RnfC, RnfD, RnfE and RnfG. FMN serves as cofactor.

The protein localises to the cell inner membrane. Its function is as follows. Part of a membrane-bound complex that couples electron transfer with translocation of ions across the membrane. The chain is Ion-translocating oxidoreductase complex subunit G from Yersinia pestis.